The sequence spans 285 residues: V-set and transmembrane domain-containing protein 2B (285 aa).

A signal peptide spans 1–28; that stretch reads MEQRNRLGALGYLLPLLLHSLLLFVADA. The Ig-like V-type domain maps to 29–143; it reads TFTEVPKDVT…DDDTQEHKAQ (115 aa). Residues 29–263 are Extracellular-facing; it reads TFTEVPKDVT…HGSGTGPGYS (235 aa). C49 and C127 are joined by a disulfide. The interval 160-225 is disordered; it reads AEAVSHIQSS…AAAAAASATH (66 aa). Low complexity-rich tracts occupy residues 176–189 and 208–225; these read ASSAVSSNNAGAAV and PAGSGVPEAAAAAASATH. Residues 264-284 form a helical membrane-spanning segment; the sequence is ADPLLSLLLLALHKFLHPLLG. Residue H285 is a topological domain, cytoplasmic.

It is found in the membrane. The sequence is that of V-set and transmembrane domain-containing protein 2B (Vstm2b) from Mus musculus (Mouse).